The sequence spans 280 residues: DegV domain-containing protein TTE1491 (280 aa).

The DegV domain occupies 4–279 (IAIVTDSLSD…PDAAGVFFEE (276 aa)). Hexadecanoate is bound by residues threonine 61 and serine 93.

Functionally, may bind long-chain fatty acids, such as palmitate, and may play a role in lipid transport or fatty acid metabolism. The polypeptide is DegV domain-containing protein TTE1491 (Caldanaerobacter subterraneus subsp. tengcongensis (strain DSM 15242 / JCM 11007 / NBRC 100824 / MB4) (Thermoanaerobacter tengcongensis)).